The sequence spans 291 residues: 33 kDa chaperonin (291 aa).

Disulfide bonds link Cys237–Cys239 and Cys270–Cys273.

The protein belongs to the HSP33 family. Under oxidizing conditions two disulfide bonds are formed involving the reactive cysteines. Under reducing conditions zinc is bound to the reactive cysteines and the protein is inactive.

It is found in the cytoplasm. Functionally, redox regulated molecular chaperone. Protects both thermally unfolding and oxidatively damaged proteins from irreversible aggregation. Plays an important role in the bacterial defense system toward oxidative stress. This is 33 kDa chaperonin from Bacillus cereus (strain G9842).